Here is a 528-residue protein sequence, read N- to C-terminus: Probable rhamnogalacturonate lyase A (528 aa).

An N-terminal signal peptide occupies residues 1–20; sequence MLSKATLLLSLPFWARVANA. N46 carries an N-linked (GlcNAc...) asparagine glycan. 2 disulfides stabilise this stretch: C50/C93 and C184/C193. An N-linked (GlcNAc...) asparagine glycan is attached at N351.

Belongs to the polysaccharide lyase 4 family.

The protein resides in the secreted. The catalysed reaction is Endotype eliminative cleavage of L-alpha-rhamnopyranosyl-(1-&gt;4)-alpha-D-galactopyranosyluronic acid bonds of rhamnogalacturonan I domains in ramified hairy regions of pectin leaving L-rhamnopyranose at the reducing end and 4-deoxy-4,5-unsaturated D-galactopyranosyluronic acid at the non-reducing end.. Its function is as follows. Pectinolytic enzymes consist of four classes of enzymes: pectin lyase, polygalacturonase, pectin methylesterase and rhamnogalacturonase. Degrades the rhamnogalacturonan I (RG-I) backbone of pectin. In Neosartorya fischeri (strain ATCC 1020 / DSM 3700 / CBS 544.65 / FGSC A1164 / JCM 1740 / NRRL 181 / WB 181) (Aspergillus fischerianus), this protein is Probable rhamnogalacturonate lyase A (rglA).